Consider the following 184-residue polypeptide: Probable gluconokinase (184 aa).

11–18 (GVSGSGKS) serves as a coordination point for ATP.

This sequence belongs to the gluconokinase GntK/GntV family.

It catalyses the reaction D-gluconate + ATP = 6-phospho-D-gluconate + ADP + H(+). Its pathway is carbohydrate acid metabolism; D-gluconate degradation. This Mus musculus (Mouse) protein is Probable gluconokinase (Idnk).